The primary structure comprises 166 residues: Phosphodiesterase MJ0936 (166 aa).

7 residues coordinate Mn(2+): Asp-8, His-10, Asp-36, Asn-59, His-97, His-120, and His-122. Ni(2+) contacts are provided by Asp-8, His-10, Asp-36, Asn-59, His-97, His-120, and His-122.

It belongs to the metallophosphoesterase superfamily. YfcE family. As to quaternary structure, monomer. It depends on Ni(2+) as a cofactor. Mn(2+) is required as a cofactor.

With respect to regulation, competitively inhibited by phosphate. In terms of biological role, shows phosphodiesterase activity. Hydrolyzes phosphodiesters bonds in the artificial chromogenic substrates bis-p-nitrophenyl phosphate (bis-pNPP), and less efficiently thymidine 5'-monophosphate p-nitrophenyl ester (pNP-TMP) and p-nitrophenylphosphorylcholine (pNPPC). No catalytic activity was found toward cAMP or cGMP, nucleotides or phospholipase substrates such as phosphatidylcholine. The physiological substrate is unknown. In Methanocaldococcus jannaschii (strain ATCC 43067 / DSM 2661 / JAL-1 / JCM 10045 / NBRC 100440) (Methanococcus jannaschii), this protein is Phosphodiesterase MJ0936.